Consider the following 179-residue polypeptide: Large ribosomal subunit protein uL5 (179 aa).

This sequence belongs to the universal ribosomal protein uL5 family. Part of the 50S ribosomal subunit; part of the 5S rRNA/L5/L18/L25 subcomplex. Contacts the 5S rRNA and the P site tRNA. Forms a bridge to the 30S subunit in the 70S ribosome.

Functionally, this is one of the proteins that bind and probably mediate the attachment of the 5S RNA into the large ribosomal subunit, where it forms part of the central protuberance. In the 70S ribosome it contacts protein S13 of the 30S subunit (bridge B1b), connecting the 2 subunits; this bridge is implicated in subunit movement. Contacts the P site tRNA; the 5S rRNA and some of its associated proteins might help stabilize positioning of ribosome-bound tRNAs. This chain is Large ribosomal subunit protein uL5, found in Enterobacter sp. (strain 638).